Reading from the N-terminus, the 307-residue chain is 4-hydroxythreonine-4-phosphate dehydrogenase (307 aa).

The substrate site is built by His126 and Thr127. Positions 156, 195, and 251 each coordinate a divalent metal cation. Substrate-binding residues include Lys259, Asn268, and Arg277.

It belongs to the PdxA family. In terms of assembly, homodimer. The cofactor is Zn(2+). Mg(2+) is required as a cofactor. Co(2+) serves as cofactor.

It is found in the cytoplasm. The enzyme catalyses 4-(phosphooxy)-L-threonine + NAD(+) = 3-amino-2-oxopropyl phosphate + CO2 + NADH. It functions in the pathway cofactor biosynthesis; pyridoxine 5'-phosphate biosynthesis; pyridoxine 5'-phosphate from D-erythrose 4-phosphate: step 4/5. In terms of biological role, catalyzes the NAD(P)-dependent oxidation of 4-(phosphooxy)-L-threonine (HTP) into 2-amino-3-oxo-4-(phosphooxy)butyric acid which spontaneously decarboxylates to form 3-amino-2-oxopropyl phosphate (AHAP). This is 4-hydroxythreonine-4-phosphate dehydrogenase from Helicobacter pylori (strain HPAG1).